Consider the following 591-residue polypeptide: MLILNGFSSATLALITPPFLPKGGKALSQSGPDGLASITLPLPISAERGFAPALALHYSSGGGNGPFGVGWSCATMSIARSTSHGVPQYNDSDEFLGPDGEVLVQTLSTGDAPNPVTCFAYGDVSFPQSYTVTRYQPRTESSFYRLEYWVGNSNGDDFWLLHDSNGILHLLGKTAAARLSDPQAASHTAQWLVEESVTPAGEHIYYSYLAENGDNVDLNGNEAGRDRSAMRYLSKVQYGNATPAADLYLWTSATPAVQWLFTLVFDYGERGVDPQVPPAFTAQNSWLARQDPFSLYNYGFEIRLHRLCRQVLMFHHFPDELGEADTLVSRLLLEYDENPILTQLCAARTLAYEGDGYRRAPVNNMMPPPPPPPMMGGNSSRPKSKWAIVEESKQIQALRYYSAQGYSVINKYLRGDDYPETQAKETLLSRDYLSTNEPSDEEFKNAMSVYINDIAEGLSSLPETDHRVVYRGLKLDKPALSDVLKEYTTIGNIIIDKAFMSTSPDKAWINDTILNIYLEKGHKGRILGDVAHFKGEAEMLFPPNTKLKIESIVNCGSQDFASQLSKLRLSDDATADTNRIKRIINMRVLNS.

One can recognise a TR mART core domain in the interval 373–576 (PMMGGNSSRP…LRLSDDATAD (204 aa)). Active-site residues include R471, S501, and E538.

Belongs to the SpvB family.

It localises to the secreted. It carries out the reaction L-arginyl-[protein] + NAD(+) = N(omega)-(ADP-D-ribosyl)-L-arginyl-[protein] + nicotinamide + H(+). Functionally, mono-ADP-ribosylates eukaryotic muscle and non-muscle actin on 'Arg-177'. ADP-ribosylation prevents the polymerization of G-actin to F-actin, causing actin filament depolymerization, destruction of the cytoskeleton and cytotoxicity. Does not possess NAD(+)-glycohydrolase activity, unlike most mART enzymes. This Salmonella enteritidis protein is Mono(ADP-ribosyl)transferase SpvB (spvB).